Here is a 507-residue protein sequence, read N- to C-terminus: Type II methyltransferase M.PstI (507 aa).

Belongs to the N(4)/N(6)-methyltransferase family. As to quaternary structure, monomer.

The catalysed reaction is a 2'-deoxyadenosine in DNA + S-adenosyl-L-methionine = an N(6)-methyl-2'-deoxyadenosine in DNA + S-adenosyl-L-homocysteine + H(+). A gamma subtype methylase that recognizes the double-stranded sequence 5'-CTGCAG-3', methylates A-5 on both strands, and protects the DNA from cleavage by the PstI endonuclease. The polypeptide is Type II methyltransferase M.PstI (pstIM) (Providencia stuartii).